Here is a 258-residue protein sequence, read N- to C-terminus: Neurotrophin-3 (258 aa).

The first 18 residues, 1-18, serve as a signal peptide directing secretion; sequence MSILFYVIFLAYLRGIQG. A propeptide spanning residues 19–139 is cleaved from the precursor; the sequence is NSMDQRSLPE…ANRTSPRRKR (121 aa). The disordered stretch occupies residues 60–85; it reads QSTLPKAEAPREPEQGEATRSEFQPM. Positions 67 to 79 are enriched in basic and acidic residues; sequence EAPREPEQGEATR. The N-linked (GlcNAc...) asparagine glycan is linked to asparagine 131. Disulfide bonds link cysteine 153–cysteine 218, cysteine 196–cysteine 247, and cysteine 206–cysteine 249.

This sequence belongs to the NGF-beta family. Brain and peripheral tissues.

The protein localises to the secreted. Its function is as follows. Seems to promote the survival of visceral and proprioceptive sensory neurons. This chain is Neurotrophin-3 (Ntf3), found in Mus musculus (Mouse).